Here is a 198-residue protein sequence, read N- to C-terminus: dITP/XTP pyrophosphatase (198 aa).

7 to 12 (TRNAGK) is a substrate binding site. Residues Glu40 and Asp69 each coordinate Mg(2+). Asp69 serves as the catalytic Proton acceptor. Substrate contacts are provided by residues Ser70, 152–155 (FGYD), Lys175, and 180–181 (HR).

It belongs to the HAM1 NTPase family. Homodimer. Mg(2+) is required as a cofactor.

The catalysed reaction is XTP + H2O = XMP + diphosphate + H(+). It carries out the reaction dITP + H2O = dIMP + diphosphate + H(+). It catalyses the reaction ITP + H2O = IMP + diphosphate + H(+). Pyrophosphatase that catalyzes the hydrolysis of nucleoside triphosphates to their monophosphate derivatives, with a high preference for the non-canonical purine nucleotides XTP (xanthosine triphosphate), dITP (deoxyinosine triphosphate) and ITP. Seems to function as a house-cleaning enzyme that removes non-canonical purine nucleotides from the nucleotide pool, thus preventing their incorporation into DNA/RNA and avoiding chromosomal lesions. The protein is dITP/XTP pyrophosphatase of Exiguobacterium sibiricum (strain DSM 17290 / CCUG 55495 / CIP 109462 / JCM 13490 / 255-15).